The following is a 501-amino-acid chain: METILEQQRRYHEEKERLMDVMAKEMLTKKSTLRDQINSDHRTRAMQDRYMEVSGNLRDLYDDKDGLRKEELNAISGPNEFAEFYNRLKQIKEFHRKHPNEICVPMSVEFEELLKARENPSEEAQNLVEFTDEEGYGRYLDLHDCYLKYINLKASEKLDYITYLSIFDQLFDIPKERKNAEYKRYLEMLLEYLQDYTDRVKPLQDQNELFGKIQAEFEKKWENGTFPGWPKETSSALTHAGAHLDLSAFSSWEELASLGLDRLKSALLALGLKCGGTLEERAQRLFSTKGKSLESLDTSLFAKNPKSKGTKRDTERNKDIAFLEAQIYEYVEILGEQRHLTHENVQRKQARTGEEREEEEEEQISESESEDEENEIIYNPKNLPLGWDGKPIPYWLYKLHGLNINYNCEICGNYTYRGPKAFQRHFAEWRHAHGMRCLGIPNTAHFANVTQIEDAVSLWAKLKLQKASERWQPDTEEEYEDSSGNVVNKKTYEDLKRQGLL.

At methionine 1 the chain carries N-acetylmethionine. A phosphoserine mark is found at serine 54 and serine 121. The short motif at 175-179 (KERKN) is the Nuclear localization signal element. Serine 295 and serine 299 each carry phosphoserine. Residues 343–354 (ENVQRKQARTGE) show a composition bias toward basic and acidic residues. The interval 343–374 (ENVQRKQARTGEEREEEEEEQISESESEDEEN) is disordered. The span at 355-374 (EREEEEEEQISESESEDEEN) shows a compositional bias: acidic residues. Phosphoserine occurs at positions 365, 367, and 369. The segment at 406–437 (YNCEICGNYTYRGPKAFQRHFAEWRHAHGMRC) adopts a Matrin-type zinc-finger fold. The residue at position 475 (threonine 475) is a Phosphothreonine.

Belongs to the SF3A3 family. As to quaternary structure, component of the 17S U2 SnRNP complex, a ribonucleoprotein complex that contains small nuclear RNA (snRNA) U2 and a number of specific proteins. Part of the SF3A subcomplex of the 17S U2 SnRNP complex which is composed of three subunits; SF3A3/SAP61, SF3A2/SAP62 and SF3A1/SAP114. SF3A associates with the splicing factor SF3B and a 12S RNA unit to form the mature 17S U2 small nuclear ribonucleoprotein complex (17S U2 snRNP). Identified in the spliceosome 'E' complex, a precursor of the spliceosome 'A' complex. Identified in the spliceosome 'A' and 'B' complexes. Identified in the spliceosome 'C' complex. In terms of tissue distribution, ubiquitous.

Its subcellular location is the nucleus speckle. It is found in the nucleus. Its function is as follows. Component of the 17S U2 SnRNP complex of the spliceosome, a large ribonucleoprotein complex that removes introns from transcribed pre-mRNAs. The 17S U2 SnRNP complex (1) directly participates in early spliceosome assembly and (2) mediates recognition of the intron branch site during pre-mRNA splicing by promoting the selection of the pre-mRNA branch-site adenosine, the nucleophile for the first step of splicing. Within the 17S U2 SnRNP complex, SF3A3 is part of the SF3A subcomplex that contributes to the assembly of the 17S U2 snRNP, and the subsequent assembly of the pre-spliceosome 'E' complex and the pre-catalytic spliceosome 'A' complex. Involved in pre-mRNA splicing as a component of pre-catalytic spliceosome 'B' complexes. This Homo sapiens (Human) protein is Splicing factor 3A subunit 3 (SF3A3).